Here is a 317-residue protein sequence, read N- to C-terminus: MAASSGSPQLATEDHLRKGEAVSGLHAVVAGSVSGLVARSVTAPMDTVKIRRQLQLASEHKYHGILHTFRTVAREEGVRALWKGNVPASAMYVLYGSLQFGTYAWLNTAAASAGLPPQAHSLAVGALAGLVSSLLTYPLDLLRTRLVANRSAHFFSLRRQARVIWDTEGPAGFFRGGAWAIAATTLTTGLIFGIYETCTIAADTYGLPWLAAAASPTAGLVSKAAVFPLDTVRRRLQIVDAKHIPFFTRDPGAYSALRGTRFLGLAVHMVRAEGIASLYKGLTMALCKSTPTTVITLWVYQRCLRLLEPTRAPQLPA.

6 helical membrane passes run 21 to 41, 86 to 106, 122 to 142, 176 to 196, 207 to 227, and 281 to 300; these read AVSG…ARSV, VPAS…YAWL, LAVG…LDLL, GGAW…GIYE, LPWL…AAVF, and GLTM…LWVY. Solcar repeat units lie at residues 22–109, 116–201, and 206–306; these read VSGL…LNTA, PPQA…CTIA, and GLPW…CLRL.

Belongs to the mitochondrial carrier (TC 2.A.29) family.

Its subcellular location is the mitochondrion inner membrane. Mitochondrial transporter that mediates uptake of thiamine pyrophosphate (ThPP) into mitochondria. The protein is Mitochondrial thiamine pyrophosphate carrier 1 (TPC1) of Eremothecium gossypii (strain ATCC 10895 / CBS 109.51 / FGSC 9923 / NRRL Y-1056) (Yeast).